The following is a 1122-amino-acid chain: Maestro heat-like repeat-containing protein family member 7 (1122 aa).

2 disordered regions span residues Met-1–Asp-144 and Ser-183–Leu-203. Residues Thr-33–Pro-65 show a composition bias toward low complexity. Composition is skewed to polar residues over residues Asp-75 to Ala-95, Pro-120 to Asn-136, and His-184 to Leu-203. Asn-200, Asn-210, Asn-255, Asn-267, and Asn-296 each carry an N-linked (GlcNAc...) asparagine glycan. The interval Trp-246 to Gly-265 is disordered. Ser-356 carries the post-translational modification Phosphoserine. Residues Phe-363 to Asp-385 are disordered. The span at Glu-372–Asp-385 shows a compositional bias: basic and acidic residues. 2 N-linked (GlcNAc...) asparagine glycosylation sites follow: Asn-541 and Asn-546. Transmembrane regions (helical) follow at residues Thr-548–Gly-568 and Leu-722–Met-742. 4 HEAT repeats span residues Gln-913–Val-950, Thr-992–Lys-1029, Ser-1035–Met-1072, and Glu-1080–Leu-1117.

The protein localises to the membrane. The chain is Maestro heat-like repeat-containing protein family member 7 (Mroh7) from Rattus norvegicus (Rat).